Consider the following 236-residue polypeptide: EF-hand domain-containing protein D1 (236 aa).

Positions 1–48 are disordered; it reads MASEELASKLQRRLQWEEGDSGLQPAPGAAPDPEPQPQPPAWAPTARA. The segment covering 28-42 has biased composition (pro residues); it reads GAAPDPEPQPQPPAW. 2 consecutive EF-hand domains span residues 87–122 and 123–158; these read RLIKDLESMFKLYDAGRDGFIDLMELKLMMEKLGAP and QTHLGLKSMIKEVDEDFDGKLSFREFLLIFHKAAAG. Ca(2+) is bound by residues Asp100, Asp104, Glu111, Asp136, Asp138, Asp140, Lys142, and Glu147.

The protein resides in the mitochondrion inner membrane. Acts as a calcium sensor for mitochondrial flash (mitoflash) activation, an event characterized by stochastic bursts of superoxide production. May play a role in neuronal differentiation. The sequence is that of EF-hand domain-containing protein D1 (EFHD1) from Bos taurus (Bovine).